The following is a 788-amino-acid chain: Protein translocase subunit SecA 2 (788 aa).

ATP-binding positions include Q86, 104 to 108 (GEGKT), and D493.

The protein belongs to the SecA family. As to quaternary structure, monomer and homodimer. Part of the essential Sec protein translocation apparatus which comprises SecA, SecYEG and auxiliary proteins SecDF. Other proteins may also be involved.

It is found in the cell membrane. It localises to the cytoplasm. It catalyses the reaction ATP + H2O + cellular proteinSide 1 = ADP + phosphate + cellular proteinSide 2.. Its function is as follows. Part of the Sec protein translocase complex. Interacts with the SecYEG preprotein conducting channel. Has a central role in coupling the hydrolysis of ATP to the transfer of proteins into and across the cell membrane, serving as an ATP-driven molecular motor driving the stepwise translocation of polypeptide chains across the membrane. The protein is Protein translocase subunit SecA 2 of Bacillus cereus (strain ZK / E33L).